Consider the following 770-residue polypeptide: MADKITDEYAVGIDPEIYANNPAYSSLFNPYIHKQTIIADHVSVQCHIDLNGIDAVGSKFGNLNAHAGNFTSLCAPNCLPERFALVAYTVEYAFLHDDETDNAADQEALLLENKMLHQALNQSGMTSVSTRVSDKAQRKSEVQAKIAAEYLRLDPVFGEWFLNKWQTFTACVKDVRSLEFPSLDDYLEFRIVDAAADWTLYNFRWGSGITLTPEEEKLADPMSYVAYAELCLVNDLFSWDKEYASHIKSNGDVPLVNAVHIVAVTQGLTHCAAKAVVQAEVRAHEERFCQLKEQYEATDKPSHEVLRWLRLLEHSMAGNWVWSLCVPRYCKVDRNPYKDHLEKYGSDAVRVLTPLDRLCWSKQEIKEMKRNQLKEPSSSTYKTHFSPLEPNPGPEQTRLTISQTQQQRPVLNPYTYINSLPSKNVRQTLIAALNSWYKVPVKSLLIIEGAVNFLHNSSLLLDDIQDGSVLRRGRPVAHQIFGVGQTINTATYLMNEALYLIQMLSPSAVSAYTDEMRNLQLGQGRDLYWSYHTHVPTPAQYISMVDGKTGGLFRLISRLMRSEATKNSDLDISQFATLLGRHFQIRDDYQNLQSEDVTNPHIVSLYAPRANMLLQYTKNKGFCDDLDEGKVSFPVILSMQSPGFSNTALSSVFKGSRKGETLSLEMKQYMLEEITARGAFSETKAVLRKLHTELLSLLMETEKKAGGVENWALRLLIMKLDIVEEKKVAPPKSDSHWGVNQRRAWKGGQKNGRPIDKACFLRAMEEALQK.

Positions 5 to 335 are terpene cyclase; the sequence is ITDEYAVGID…VPRYCKVDRN (331 aa). Mg(2+) contacts are provided by aspartate 97 and aspartate 101. Residues aspartate 97, aspartate 101, 190–193, asparagine 234, 238–242, and 328–329 contribute to the substrate site; these read RIVD, SWDKE, and RY. Positions 97 to 101 match the DDXXD 1 motif; it reads DDETD. The short motif at 234–242 is the NSE/DTE element; it reads NDLFSWDKE. Positions 336–720 are prenyltransferase; it reads PYKDHLEKYG…WALRLLIMKL (385 aa). Residues 371–397 form a disordered region; sequence NQLKEPSSSTYKTHFSPLEPNPGPEQT. Over residues 374 to 383 the composition is skewed to polar residues; the sequence is KEPSSSTYKT. Isopentenyl diphosphate contacts are provided by lysine 423, arginine 426, and histidine 455. Residues aspartate 462 and aspartate 466 each contribute to the Mg(2+) site. The short motif at 462-466 is the DDXXD 2 element; that stretch reads DDIQD. Arginine 471 is a dimethylallyl diphosphate binding site. Arginine 472 contacts isopentenyl diphosphate. The dimethylallyl diphosphate site is built by lysine 548, threonine 549, glutamine 584, asparagine 591, lysine 620, and lysine 630.

In the N-terminal section; belongs to the terpene synthase family. The protein in the C-terminal section; belongs to the FPP/GGPP synthase family. Hexamer. Mg(2+) is required as a cofactor.

The catalysed reaction is isopentenyl diphosphate + (2E,6E)-farnesyl diphosphate = (2E,6E,10E)-geranylgeranyl diphosphate + diphosphate. It carries out the reaction (2E,6E,10E)-geranylgeranyl diphosphate + H2O = (+)-penichrysol + diphosphate. It functions in the pathway secondary metabolite biosynthesis; terpenoid biosynthesis. Bifunctional terpene synthase converts dimethylallyl diphosphate (DMAPP) and isopentenyl diphosphate (IPP) into a cyclopiane-type diterpene. The C-terminal prenyltransferase (PT) domain of PcCS catalyzes formation of geranylgeranyl pyrophosphate (GGPP), whereas the N-terminal terpene cyclase (TC) domain catalyzes the cyclization of GGPP to the cyclopiane-type diterpene penichrysol. This chain is Cyclopiane-type diterpene synthase, found in Penicillium chrysogenum (Penicillium notatum).